Here is a 416-residue protein sequence, read N- to C-terminus: Na(+)/H(+) antiporter NhaA (416 aa).

Helical transmembrane passes span 18–38 (VGGAILLVAAAIALLWVNSPW), 59–79 (LTLADWTKDGLLAVFFFVAGL), 97–117 (ALPIIAAVGGVVTPALIAAVI), 127–147 (GWAIPVATDIAFALGVLALTG), 167–187 (LLAIILIAVLFTVGVSLLWLL), 265–285 (GICVPLFALFAAGVPLNATVF), 297–317 (VMLGLLLGKTIGIFGISWVAI), 333–353 (MFALSVLGAIGFTVSLLVAEL), and 363–383 (LAKAAVLITSLAASLAGSALL). The tract at residues 396-416 (ALELQPDEGDASDPSEGGSLR) is disordered.

This sequence belongs to the NhaA Na(+)/H(+) (TC 2.A.33) antiporter family.

It is found in the cell membrane. It catalyses the reaction Na(+)(in) + 2 H(+)(out) = Na(+)(out) + 2 H(+)(in). In terms of biological role, na(+)/H(+) antiporter that extrudes sodium in exchange for external protons. The polypeptide is Na(+)/H(+) antiporter NhaA (Nocardia farcinica (strain IFM 10152)).